Reading from the N-terminus, the 356-residue chain is Trans-enoyl reductase pgmF (356 aa).

Residues 57 to 60 (VDFK), 175 to 178 (SGGC), 198 to 201 (STPN), Y216, 261 to 262 (VG), and 342 to 343 (AK) each bind NADP(+).

Belongs to the zinc-containing alcohol dehydrogenase family.

In terms of biological role, FAD-linked oxidoreductase; part of the gene cluster that mediates the biosynthesis of pleosporalin A, ascomycone A, as well as a third cryptic naphthoquinone derived pigment, all responsible for the coloration of conidia. The pathway begins with the biosynthesis of the cyclized heptaketide 3-acetonyl-1,6,8-trihydroxy-2-naphthaldehyde by the NR-PKS pgmA. The C-6 hydroxyl group is further methylated by the O-methyltransferase pgmB to yield fusarubinaldehyde which is in turn oxidized by the cytochrome P450 monooxygenase pgmC at C-9. The C-1 hydroxyl group is then methylated spontaneously. Although pgmE, pgmD and pgmH are essential for the production of pleosporalin A, it is not the case for the 2 other final products and it remains difficult to assign a specific function to each enzyme. PgmF and pgmG seem not to be involved in pigment biosynthesis although they were regulated by the cluster-specific transcription factor pgmR. This chain is Trans-enoyl reductase pgmF, found in Aspergillus terreus (strain NIH 2624 / FGSC A1156).